We begin with the raw amino-acid sequence, 301 residues long: Tetrahydromethanopterin S-methyltransferase subunit E (301 aa).

5 helical membrane passes run 85–105 (VIFA…TYCI), 130–150 (HTPV…VVSY), 151–171 (IMVA…IWGI), 232–252 (PVTG…TAVF), and 258–278 (LTMG…LIIW).

It belongs to the MtrE family. As to quaternary structure, the complex is composed of 8 subunits; MtrA, MtrB, MtrC, MtrD, MtrE, MtrF, MtrG and MtrH.

The protein resides in the cell membrane. It catalyses the reaction 5-methyl-5,6,7,8-tetrahydromethanopterin + coenzyme M + 2 Na(+)(in) = 5,6,7,8-tetrahydromethanopterin + methyl-coenzyme M + 2 Na(+)(out). Part of a complex that catalyzes the formation of methyl-coenzyme M and tetrahydromethanopterin from coenzyme M and methyl-tetrahydromethanopterin. This is an energy-conserving, sodium-ion translocating step. In Methanococcoides burtonii (strain DSM 6242 / NBRC 107633 / OCM 468 / ACE-M), this protein is Tetrahydromethanopterin S-methyltransferase subunit E.